The primary structure comprises 211 residues: Protein Nef (211 aa).

Gly-2 carries N-myristoyl glycine; by host lipidation. The residue at position 6 (Ser-6) is a Phosphoserine; by host. Residues 67-70 (EDEE) are acidic; interacts with host PACS1 and PACS2; stabilizes the interaction of NEF/MHC-I with host AP1M1; necessary for MHC-I internalization. Residues 74–83 (PVRPQVPLRP) are SH3-binding; interaction with Src family tyrosine kinases. The short motif at 77-80 (PQVP) is the PxxP; stabilizes the interaction of NEF/MHC-I with host AP1M1; necessary for MHC-I internalization element. The interval 113–129 (DILDLWVYHTQGYFPDW) is mediates dimerization, Nef-PTE1 interaction. Residues 153 to 185 (MDPDQVEEANEGENNSLLHPISLHGMDDPEKEV) are binding to ATP6V1H. Residues 169 to 170 (LL) carry the Dileucine internalization motif; necessary for CD4 internalization motif. Positions 179 to 180 (DD) match the Diacidic; necessary for CD4 internalization motif.

This sequence belongs to the lentivirus primate group Nef protein family. Monomer; cytosolic form. Homodimer; membrane bound form. Interacts with Nef associated p21-activated kinase (PAK2); this interaction activates PAK2. Associates with the Nef-MHC-I-AP1 complex; this complex is required for MHC-I internalization. Interacts (via C-terminus) with host PI3-kinase. Interacts with host PACS1; this interaction seems to be weak. Interacts with host PACS2. Interacts with host LCK and MAPK3; these interactions inhibit the kinase activity of the latter. Interacts with host ATP6V1H; this interaction may play a role in CD4 endocytosis. Associates with the CD4-Nef-AP2 complex; this complex is required for CD4 internalization. Interacts with host AP2 subunit alpha and AP2 subunit sigma2. Interacts with TCR-zeta chain; this interaction up-regulates the Fas ligand (FasL) surface expression. Interacts with host HCK, LYN, and SRC; these interactions activate the Src family kinases. Interacts with MAP3K5; this interaction inhibits the Fas and TNFR-mediated death signals. Interacts with beta-COP and PTE1. Interacts with human RACK1; this increases Nef phosphorylation by PKC. Interacts with TP53; this interaction decreases the half-life of TP53, protecting the infected cell against p53-mediated apoptosis. Post-translationally, the virion-associated Nef proteins are cleaved by the viral protease to release the soluble C-terminal core protein. Nef is probably cleaved concomitantly with viral structural proteins on maturation of virus particles. Myristoylated. In terms of processing, phosphorylated on serine residues, probably by host PKCdelta and theta.

Its subcellular location is the host cell membrane. The protein resides in the virion. It localises to the secreted. The protein localises to the host Golgi apparatus membrane. Its function is as follows. Factor of infectivity and pathogenicity, required for optimal virus replication. Alters numerous pathways of T-lymphocyte function and down-regulates immunity surface molecules in order to evade host defense and increase viral infectivity. Alters the functionality of other immunity cells, like dendritic cells, monocytes/macrophages and NK cells. In infected CD4(+) T-lymphocytes, down-regulates the surface MHC-I, mature MHC-II, CD4, CD28, CCR5 and CXCR4 molecules. Mediates internalization and degradation of host CD4 through the interaction of with the cytoplasmic tail of CD4, the recruitment of AP-2 (clathrin adapter protein complex 2), internalization through clathrin coated pits, and subsequent transport to endosomes and lysosomes for degradation. Diverts host MHC-I molecules to the trans-Golgi network-associated endosomal compartments by an endocytic pathway to finally target them for degradation. MHC-I down-regulation may involve AP-1 (clathrin adapter protein complex 1) or possibly Src family kinase-ZAP70/Syk-PI3K cascade recruited by PACS2. In consequence infected cells are masked for immune recognition by cytotoxic T-lymphocytes. Decreasing the number of immune receptors also prevents reinfection by more HIV particles (superinfection). Down-regulates host SERINC3 and SERINC5 thereby excluding these proteins from the viral particles. Virion infectivity is drastically higher when SERINC3 or SERINC5 are excluded from the viral envelope, because these host antiviral proteins impair the membrane fusion event necessary for subsequent virion penetration. Functionally, bypasses host T-cell signaling by inducing a transcriptional program nearly identical to that of anti-CD3 cell activation. Interaction with TCR-zeta chain up-regulates the Fas ligand (FasL). Increasing surface FasL molecules and decreasing surface MHC-I molecules on infected CD4(+) cells send attacking cytotoxic CD8+ T-lymphocytes into apoptosis. In terms of biological role, plays a role in optimizing the host cell environment for viral replication without causing cell death by apoptosis. Protects the infected cells from apoptosis in order to keep them alive until the next virus generation is ready to strike. Inhibits the Fas and TNFR-mediated death signals by blocking MAP3K5/ASK1. Decreases the half-life of TP53, protecting the infected cell against p53-mediated apoptosis. Inhibits the apoptotic signals regulated by the Bcl-2 family proteins through the formation of a Nef/PI3-kinase/PAK2 complex that leads to activation of PAK2 and induces phosphorylation of host BAD. Its function is as follows. Extracellular Nef protein targets CD4(+) T-lymphocytes for apoptosis by interacting with CXCR4 surface receptors. The chain is Protein Nef from Homo sapiens (Human).